The primary structure comprises 141 residues: Protein NrdI (141 aa).

Belongs to the NrdI family.

Probably involved in ribonucleotide reductase function. This is Protein NrdI from Bifidobacterium animalis subsp. lactis (strain AD011).